The chain runs to 251 residues: 5'-nucleotidase SurE (251 aa).

A divalent metal cation contacts are provided by aspartate 8, aspartate 9, serine 39, and asparagine 91.

Belongs to the SurE nucleotidase family. A divalent metal cation serves as cofactor.

Its subcellular location is the cytoplasm. The enzyme catalyses a ribonucleoside 5'-phosphate + H2O = a ribonucleoside + phosphate. Nucleotidase that shows phosphatase activity on nucleoside 5'-monophosphates. This is 5'-nucleotidase SurE from Thioalkalivibrio sulfidiphilus (strain HL-EbGR7).